A 411-amino-acid chain; its full sequence is 2,3-bisphosphoglycerate-independent phosphoglycerate mutase (411 aa).

The protein belongs to the BPG-independent phosphoglycerate mutase family. A-PGAM subfamily.

It carries out the reaction (2R)-2-phosphoglycerate = (2R)-3-phosphoglycerate. Its pathway is carbohydrate degradation; glycolysis; pyruvate from D-glyceraldehyde 3-phosphate: step 3/5. In terms of biological role, catalyzes the interconversion of 2-phosphoglycerate and 3-phosphoglycerate. The sequence is that of 2,3-bisphosphoglycerate-independent phosphoglycerate mutase from Pyrobaculum arsenaticum (strain DSM 13514 / JCM 11321 / PZ6).